A 1078-amino-acid chain; its full sequence is Lon protease homolog, mitochondrial (1078 aa).

A mitochondrion-targeting transit peptide spans methionine 1 to asparagine 27. Residues serine 71–proline 123 are compositionally biased toward basic and acidic residues. Residues serine 71–glycine 179 are disordered. The segment covering proline 127–aspartate 157 has biased composition (low complexity). Residues serine 158–phenylalanine 172 are compositionally biased toward basic and acidic residues. Residues proline 182–alanine 400 form the Lon N-terminal domain. Glycine 548 to threonine 555 is a binding site for ATP. The segment at asparagine 792 to glutamate 825 is disordered. Positions glutamate 815 to glutamate 825 are enriched in basic and acidic residues. The 189-residue stretch at threonine 861 to glycine 1049 folds into the Lon proteolytic domain. Active-site residues include serine 955 and lysine 998.

This sequence belongs to the peptidase S16 family. As to quaternary structure, homohexamer or homoheptamer. Organized in a ring with a central cavity.

It localises to the mitochondrion matrix. The catalysed reaction is Hydrolysis of proteins in presence of ATP.. ATP-dependent serine protease that mediates the selective degradation of misfolded, unassembled or oxidatively damaged polypeptides as well as certain short-lived regulatory proteins in the mitochondrial matrix. May also have a chaperone function in the assembly of inner membrane protein complexes. Participates in the regulation of mitochondrial gene expression and in the maintenance of the integrity of the mitochondrial genome. Binds to mitochondrial DNA in a site-specific manner. This chain is Lon protease homolog, mitochondrial, found in Candida albicans (strain SC5314 / ATCC MYA-2876) (Yeast).